The primary structure comprises 270 residues: DNA adenine methylase (270 aa).

Residues Trp10, Lys14, Asp54, and Asp181 each contribute to the S-adenosyl-L-methionine site.

This sequence belongs to the N(4)/N(6)-methyltransferase family.

It catalyses the reaction a 2'-deoxyadenosine in DNA + S-adenosyl-L-methionine = an N(6)-methyl-2'-deoxyadenosine in DNA + S-adenosyl-L-homocysteine + H(+). Its function is as follows. An alpha subtype methylase, recognizes the double-stranded sequence 5'-GATC-3' and methylates A-2. Overexpression leads to hypermutability. May be involved in methyl-directed DNA mismatch repair, initiation of chromosome replication and gene expression. The chain is DNA adenine methylase from Serratia marcescens.